The following is a 1103-amino-acid chain: DNA polymerase delta catalytic subunit (1103 aa).

Residues 1–29 are disordered; the sequence is MDFKRRQGPGPGVPPKRARGGLWDEDEPS. Residues 4-19 carry the Nuclear localization signal motif; sequence KRRQGPGPGVPPKRAR. R19 carries the post-translational modification Omega-N-methylarginine. K570 is covalently cross-linked (Glycyl lysine isopeptide (Lys-Gly) (interchain with G-Cter in SUMO2)). Residues C1008, C1011, C1022, and C1025 each coordinate Zn(2+). A CysA-type zinc finger spans residues 1008-1025; the sequence is CIGCRSVINHQGAVCEFC. Positions 1054, 1057, 1067, and 1072 each coordinate [4Fe-4S] cluster. The short motif at 1054–1072 is the CysB motif element; sequence CQRCQGSLHEDVICTSRDC.

Belongs to the DNA polymerase type-B family. In terms of assembly, component of the tetrameric DNA polymerase delta complex (Pol-delta4), which consists of POLD1/p125, POLD2/p50, POLD3/p66/p68 and POLD4/p12, with POLD1 bearing both DNA polymerase and 3' to 5' proofreading exonuclease activities. Within Pol-delta4, directly interacts with POLD2 and POLD4. Following genotoxic stress by DNA-damaging agents, such as ultraviolet light and methyl methanesulfonate, or by replication stress induced by treatment with hydroxyurea or aphidicolin, Pol-delta4 is converted into a trimeric form of the complex (Pol-delta3) by POLD4 degradation. Pol-delta3 is the major form at S phase replication sites and DNA damage sites. POLD1 displays different catalytic properties depending upon the complex it is found in. It exhibits higher proofreading activity and fidelity than Pol-delta4, making it particularly well suited to respond to DNA damage. Directly interacts with PCNA, as do POLD3 and POLD4; this interaction stimulates Pol-delta4 polymerase activity. As POLD2 and POLD4, directly interacts with WRNIP1; this interaction stimulates DNA polymerase delta-mediated DNA synthesis, independently of the presence of PCNA. This stimulation may be due predominantly to an increase of initiation frequency and also to increased processivity. Also observed as a dimeric complex with POLD2 (Pol-delta2). Pol-delta2 is relatively insensitive to the PCNA stimulation (2-5-fold) compared to Pol-delta4 that is stimulated by over 50-fold. The DNA polymerase delta complex interacts with POLDIP2; this interaction is probably mediated through direct binding to POLD2. Interacts with CIAO1. Interacts with POLDIP2. Interacts with RFC1. [4Fe-4S] cluster is required as a cofactor.

Its subcellular location is the nucleus. It carries out the reaction DNA(n) + a 2'-deoxyribonucleoside 5'-triphosphate = DNA(n+1) + diphosphate. Its activity is regulated as follows. Regulated by alteration of quaternary structure. Exhibits burst rates of DNA synthesis are about 5 times faster in the presence of POLD4 (Pol-delta4 complex) than in its absence (Pol-delta3 complex), while the affinity of the enzyme for its DNA and dNTP substrates appears unchanged. The Pol-delta3 complex is more likely to proofread DNA synthesis because it cleaves single-stranded DNA twice as fast and transfers mismatched DNA from the polymerase to the exonuclease sites 9 times faster compared to the Pol-delta3 complex. Pol-delta3 also extends mismatched primers 3 times more slowly in the absence of POLD4. The conversion of Pol-delta4 into Pol-delta3 is induced by genotoxic stress or by replication stress leading POLD4 degradation. Stimulated in the presence of PCNA. This stimulation is further increased in the presence of KCTD13/PDIP1, most probably via direct interaction between KCTD13 and POLD2. In terms of biological role, as the catalytic component of the trimeric (Pol-delta3 complex) and tetrameric DNA polymerase delta complexes (Pol-delta4 complex), plays a crucial role in high fidelity genome replication, including in lagging strand synthesis, and repair. Exhibits both DNA polymerase and 3'- to 5'-exonuclease activities. Requires the presence of accessory proteins POLD2, POLD3 and POLD4 for full activity. Depending upon the absence (Pol-delta3) or the presence of POLD4 (Pol-delta4), displays differences in catalytic activity. Most notably, expresses higher proofreading activity in the context of Pol-delta3 compared with that of Pol-delta4. Although both Pol-delta3 and Pol-delta4 process Okazaki fragments in vitro, Pol-delta3 may be better suited to fulfill this task, exhibiting near-absence of strand displacement activity compared to Pol-delta4 and stalling on encounter with the 5'-blocking oligonucleotides. Pol-delta3 idling process may avoid the formation of a gap, while maintaining a nick that can be readily ligated. Along with DNA polymerase kappa, DNA polymerase delta carries out approximately half of nucleotide excision repair (NER) synthesis following UV irradiation. Under conditions of DNA replication stress, in the presence of POLD3 and POLD4, may catalyze the repair of broken replication forks through break-induced replication (BIR). Involved in the translesion synthesis (TLS) of templates carrying O6-methylguanine, 8oxoG or abasic sites. In Mesocricetus auratus (Golden hamster), this protein is DNA polymerase delta catalytic subunit (POLD1).